A 262-amino-acid polypeptide reads, in one-letter code: Proteasome subunit alpha (262 aa).

The interval 235-262 (LLPTTGESDAGDSGADGSPSGDSPDTSA) is disordered.

It belongs to the peptidase T1A family. As to quaternary structure, the 20S proteasome core is composed of 14 alpha and 14 beta subunits that assemble into four stacked heptameric rings, resulting in a barrel-shaped structure. The two inner rings, each composed of seven catalytic beta subunits, are sandwiched by two outer rings, each composed of seven alpha subunits. The catalytic chamber with the active sites is on the inside of the barrel. Has a gated structure, the ends of the cylinder being occluded by the N-termini of the alpha-subunits. Is capped by the proteasome-associated ATPase, ARC.

The protein resides in the cytoplasm. It participates in protein degradation; proteasomal Pup-dependent pathway. The formation of the proteasomal ATPase ARC-20S proteasome complex, likely via the docking of the C-termini of ARC into the intersubunit pockets in the alpha-rings, may trigger opening of the gate for substrate entry. Interconversion between the open-gate and close-gate conformations leads to a dynamic regulation of the 20S proteasome proteolysis activity. Its function is as follows. Component of the proteasome core, a large protease complex with broad specificity involved in protein degradation. This is Proteasome subunit alpha from Gordonia bronchialis (strain ATCC 25592 / DSM 43247 / BCRC 13721 / JCM 3198 / KCTC 3076 / NBRC 16047 / NCTC 10667) (Rhodococcus bronchialis).